The following is a 1174-amino-acid chain: Male determiner protein Mdmd(V) (1174 aa).

Over residues 1–15 the composition is skewed to basic and acidic residues; it reads MNATDAESRKPENKP. Disordered stretches follow at residues 1 to 51, 79 to 110, and 136 to 259; these read MNAT…SGQR, RKDGSNEMLPKEDSINTNHNYTTDSNEHPVEL, and KQLS…LRRS. Residues 16–35 are compositionally biased toward low complexity; sequence SSESSSSGSTSGSSDGEVSS. Over residues 36–47 the composition is skewed to polar residues; the sequence is KTYFKNNKSKVL. Residues 79 to 92 are compositionally biased toward basic and acidic residues; the sequence is RKDGSNEMLPKEDS. Residues 93-102 show a composition bias toward polar residues; that stretch reads INTNHNYTTD. A compositionally biased stretch (low complexity) spans 138-153; the sequence is LSAYRSRSRSTRLSYS. Residues 167–180 are compositionally biased toward basic residues; the sequence is SRYKKSVLRSRRTS. Residues 183-200 are compositionally biased toward basic and acidic residues; it reads HGRDSSTTKRSVSRDKDN. Residues 201 to 223 show a composition bias toward basic residues; it reads RLRRRIGSSRSHTRSHSRFRRSE. The span at 235–259 shows a compositional bias: basic and acidic residues; it reads RSQERRHERRRSMSSDYERIALRRS. Residues 348-531 enclose the MIF4G domain; that stretch reads KKYIHGYINK…KVLFQVRRDG (184 aa). Over residues 597–608 the composition is skewed to low complexity; the sequence is DSDGSFGSGSNS. Positions 597–616 are disordered; the sequence is DSDGSFGSGSNSETALSDCD. The MI domain occupies 641–757; the sequence is ALRRTIYLTL…SWDVLDCIKL (117 aa). Residues 840–857 show a composition bias toward low complexity; that stretch reads SAPSSSSSSSLSSELSAP. Disordered stretches follow at residues 840–1045 and 1095–1133; these read SAPS…SRTK and RKDNYGNRQNHEISQRHDSEIKRRREERKKRHHEKNHSR. A compositionally biased stretch (basic residues) spans 869–909; that stretch reads KKKHKGKNKKMTKKKNPSKKKEKTKKIVGKNKIAAKNKTIK. Over residues 910–924 the composition is skewed to basic and acidic residues; it reads RRTDKDNSSSKDNFL. The span at 926–957 shows a compositional bias: low complexity; it reads SESSSNESISLDSLSSELFAPSSYSSSESSND. Residues 963–1001 are compositionally biased toward basic residues; that stretch reads KHKGKNKKMTKKKNPSNKREKTKKKLSKNKKAPNKNTKK. A compositionally biased stretch (low complexity) spans 1010–1020; that stretch reads SSESSISESKS. Over residues 1034-1045 the composition is skewed to basic residues; the sequence is RKKRVTSKSRTK. The segment covering 1095–1118 has biased composition (basic and acidic residues); sequence RKDNYGNRQNHEISQRHDSEIKRR. The segment covering 1119–1130 has biased composition (basic residues); it reads REERKKRHHEKN.

It belongs to the CWC22 family. Component of the spliceosome C complex.

Its subcellular location is the nucleus speckle. Its function is as follows. Male determiner protein (M-factor) that controls male somatic sexual differentiation. Acts as a dominant factor that regulates the mRNA splicing of transformer (tra) and doublesex (dsx) transcripts and promotes expression of male splice forms of tra and dsx. Probably acts as a component of the spliceosome C complex required for mRNA splicing factor and exon-junction complex (EJC) assembly. Hinders eIF4AIII from non-specifically binding RNA and escorts it to the splicing machinery to promote EJC assembly on mature mRNAs. This chain is Male determiner protein Mdmd(V), found in Musca domestica (House fly).